Consider the following 437-residue polypeptide: MAAGTLYTYPENWRAFKALIAAQYSGAQVRVLSAPPHFHFGQTNRTPEFLRKFPAGKVPAFEGDDGFCVFESNAIAYYVSNEELRGSTPEAAAQVVQWVSFADSDIVPPASTWVFPTLGIMHHNKQATENAKEEVKRILGLLDTHLKTRTFLVGERVTLADITVVCTLLWLYKQVLEPSFRQAFPNTNRWFLTCINQPQFRAILGEVKLCEKMAQFDAKKFAESQPKKDTPRKEKGSREEKQKPQAERKEEKKAAAPAPEEEMDECEQALAAEPKAKDPFAHLPKSTFVLDEFKRKYSNEDTLSVALPYFWEHFDKDGWSLWYAEYRFPEELTQTFMSCNLITGMFQRLDKLRKNAFASVILFGTNNSSSISGVWVFRGQELAFPLSPDWQVDYESYTWRKLDPGSEETQTLVREYFSWEGTFQHVGKAVNQGKIFK.

A2 is subject to N-acetylalanine. Residues 2 to 87 (AAGTLYTYPE…YVSNEELRGS (86 aa)) enclose the GST N-terminal domain. A GST C-terminal domain is found at 88 to 216 (TPEAAAQVVQ…VKLCEKMAQF (129 aa)). 2 positions are modified to N6-acetyllysine: K147 and K212. Over residues 221–254 (FAESQPKKDTPRKEKGSREEKQKPQAERKEEKKA) the composition is skewed to basic and acidic residues. Residues 221–268 (FAESQPKKDTPRKEKGSREEKQKPQAERKEEKKAAAPAPEEEMDECEQ) are disordered. A Glycyl lysine isopeptide (Lys-Gly) (interchain with G-Cter in SUMO1) cross-link involves residue K253. The EF-1-gamma C-terminal domain maps to 276-437 (AKDPFAHLPK…KAVNQGKIFK (162 aa)). K285 participates in a covalent cross-link: Glycyl lysine isopeptide (Lys-Gly) (interchain with G-Cter in SUMO2). K401 bears the N6-acetyllysine mark. The residue at position 434 (K434) is an N6-acetyllysine; alternate. K434 bears the N6-malonyllysine; alternate mark.

EF-1 is composed of four subunits: alpha, beta, delta, and gamma.

In terms of biological role, probably plays a role in anchoring the complex to other cellular components. The polypeptide is Elongation factor 1-gamma (Eef1g) (Mus musculus (Mouse)).